We begin with the raw amino-acid sequence, 420 residues long: Ketoreductase sphF (420 aa).

The segment at 1 to 21 is disordered; sequence MLERPSFPRLGAGTRHHRPLG. The helical transmembrane segment at 29–49 threads the bilayer; that stretch reads WLLAFTGISGIAGMMIPYVPW. The disordered stretch occupies residues 275–298; the sequence is RQKRSPSPGRHPALGSPPAQLRQD.

The protein resides in the membrane. The enzyme catalyses 3-oxopresphingofungin + NADPH + 2 H(+) = presphingofungin + NADP(+). It participates in secondary metabolite biosynthesis. Functionally, ketoreductase; part of the gene cluster that mediates the biosynthesis of sphingofungins, bioactive molecules acting as sphingolipid inhibitors via inhibiting serine palmitoyl transferase (SPT). Within the pathway, sphF catalyzes the reduction of the C-3 ketone of 3-keto-presphingofungin to produce presphingofungin. Sphingofungin biosynthesis starts with the PKS sphB that produces an C18 polyketide precursor 3-hydroxyoctadeca-4,10-dienoyl-ACP containing one delta-6 desaturation and one delta-12 desaturation. The aminoacyl transferase sphA uses the sphB product to produce 3-keto-presphingofungin by adding an aminomalonate molecule. SphF then reduces the C-3 ketone of 3-keto-presphingofungin which leads to presphingofungin. The cytochrome P450 monooxygenase sphH converts presphingofungin into sphingofungin B1 which is further converted to sphingofungin B by the dioxygenase sphC. SphC is also able to convert presphingofungin into sphingofungin B2. The acetyltransferase sphE acetylates sphingofungin B to produce sphingofungin C, but can also convert sphingofungin B1 into sphingofungin C1 and sphingofungin B2 into sphingofungin C2. Finally, sphingofungin C can be spontaneously converted into sphingofungin D. The polypeptide is Ketoreductase sphF (Aspergillus fumigatus (strain CBS 144.89 / FGSC A1163 / CEA10) (Neosartorya fumigata)).